Consider the following 165-residue polypeptide: Transmembrane protein 253 (165 aa).

3 helical membrane passes run 31–51 (LVLAVSQLWLAVAVVPFAVSV), 60–80 (MTTALPLGPGILGLLTGIVTL), and 91–111 (LAGLLVLELSAEAFTLGGVLV). Residues 145–165 (EEVPELETGPTVASTAKRTNQ) form a disordered region. Over residues 155 to 165 (TVASTAKRTNQ) the composition is skewed to polar residues.

The protein resides in the membrane. This chain is Transmembrane protein 253 (TMEM253), found in Bos taurus (Bovine).